The sequence spans 254 residues: MYKLEVQDLHKRYGSHEVLKGVSLAAKAGDVISIIGSSGSGKSTFLRCINLLEQPHAGKILLNGEELKLVPGRDGALKAADSRQLQRMRSRLSMVFQHFNLWSHMSALENVIEAPVHVLGVSKKEAIEKAEHYLAKVGVAHRKDAYPAHMSGGEQQRVAIARALAVEPEVMLFDEPTSALDPELVGEVLKVMQDLAQEGRTMVVVTHEMGFAREVSNQLVFLHKGLVEEHGCPKEVLANPQSDRLKQFLSGSLK.

Positions L4 to L249 constitute an ABC transporter domain. G36–S43 provides a ligand contact to ATP.

The protein belongs to the ABC transporter superfamily.

The protein localises to the cell inner membrane. Functionally, part of the arginine-inducible binding-protein-dependent transport system for arginine and ornithine. Probably responsible for energy coupling to the transport system. This is Arginine/ornithine transport ATP-binding protein AotP (aotP) from Pseudomonas aeruginosa (strain ATCC 15692 / DSM 22644 / CIP 104116 / JCM 14847 / LMG 12228 / 1C / PRS 101 / PAO1).